The chain runs to 241 residues: tRNA pseudouridine synthase B (241 aa).

Asp45 serves as the catalytic Nucleophile.

It belongs to the pseudouridine synthase TruB family. Type 1 subfamily.

The enzyme catalyses uridine(55) in tRNA = pseudouridine(55) in tRNA. Its function is as follows. Responsible for synthesis of pseudouridine from uracil-55 in the psi GC loop of transfer RNAs. The polypeptide is tRNA pseudouridine synthase B (Opitutus terrae (strain DSM 11246 / JCM 15787 / PB90-1)).